The primary structure comprises 194 residues: Granulocyte colony-stimulating factor (194 aa).

The first 20 residues, K1–A20, serve as a signal peptide directing secretion. 2 cysteine pairs are disulfide-bonded: C56–C62 and C84–C94. O-linked (GalNAc...) threonine glycosylation occurs at T153.

The protein belongs to the IL-6 superfamily. Monomer. Post-translationally, O-glycosylated.

The protein resides in the secreted. Functionally, granulocyte/macrophage colony-stimulating factors are cytokines that act in hematopoiesis by controlling the production, differentiation, and function of 2 related white cell populations of the blood, the granulocytes and the monocytes-macrophages. This CSF induces granulocytes. The polypeptide is Granulocyte colony-stimulating factor (CSF3) (Felis catus (Cat)).